The following is a 486-amino-acid chain: E3 ubiquitin-protein ligase RNF8 (486 aa).

The FHA domain maps to 38–92; sequence VTVGRGFGVTYQLVSKICPLMISRNHCVLKQNPEGQWTIMDNKSLNGVWLNRARL. The tract at residues 68–72 is required for interaction with PIWIL1; sequence QNPEG. A Phosphoserine modification is found at Ser-157. The segment covering 180-201 has biased composition (polar residues); the sequence is SCESGQSVKSQGKGEVSSTPSE. The tract at residues 180–207 is disordered; that stretch reads SCESGQSVKSQGKGEVSSTPSENLDPKL. An RING-type zinc finger spans residues 404–442; sequence CIICSEYFIEAVTLNCAHSFCSYCINEWMKRKIECPICR.

It belongs to the RNF8 family. In terms of assembly, homodimer. Forms a E2-E3 ubiquitin ligase complex composed of the RNF8 homodimer and a E2 heterodimer of UBE2N and UBE2V2. Interacts with class III E2s, including UBE2E1, UBE2E2, and UBE2E3 and with UBE2N. Interacts with RXRA. Interacts (via FHA domain) with phosphorylated HERC2 (via C-terminus). Interacts with PIWIL1; leading to sequester RNF8 in the cytoplasm. Interacts with WRAP53/TCAB1. In terms of processing, autoubiquitinated through 'Lys-48' and 'Lys-63' of ubiquitin. 'Lys-63' polyubiquitination is mediated by UBE2N. 'Lys-29'-type polyubiquitination is also observed, but it doesn't require its own functional RING-type zinc finger.

It localises to the nucleus. The protein resides in the cytoplasm. Its subcellular location is the midbody. It is found in the chromosome. The protein localises to the telomere. The enzyme catalyses S-ubiquitinyl-[E2 ubiquitin-conjugating enzyme]-L-cysteine + [acceptor protein]-L-lysine = [E2 ubiquitin-conjugating enzyme]-L-cysteine + N(6)-ubiquitinyl-[acceptor protein]-L-lysine.. The protein operates within protein modification; protein ubiquitination. Its function is as follows. E3 ubiquitin-protein ligase that plays a key role in DNA damage signaling via 2 distinct roles: by mediating the 'Lys-63'-linked ubiquitination of histones H2A and H2AX and promoting the recruitment of DNA repair proteins at double-strand breaks (DSBs) sites, and by catalyzing 'Lys-48'-linked ubiquitination to remove target proteins from DNA damage sites. Following DNA DSBs, it is recruited to the sites of damage by ATM-phosphorylated MDC1 and catalyzes the 'Lys-63'-linked ubiquitination of histones H2A and H2AX, thereby promoting the formation of TP53BP1 and BRCA1 ionizing radiation-induced foci (IRIF). Also controls the recruitment of UIMC1-BRCC3 (RAP80-BRCC36) and PAXIP1/PTIP to DNA damage sites. Promotes the recruitment of NBN to DNA damage sites by catalyzing 'Lys-6'-linked ubiquitination of NBN. Also recruited at DNA interstrand cross-links (ICLs) sites and catalyzes 'Lys-63'-linked ubiquitination of histones H2A and H2AX, leading to recruitment of FAAP20 and Fanconi anemia (FA) complex, followed by interstrand cross-link repair. H2A ubiquitination also mediates the ATM-dependent transcriptional silencing at regions flanking DSBs in cis, a mechanism to avoid collision between transcription and repair intermediates. Promotes the formation of 'Lys-63'-linked polyubiquitin chains via interactions with the specific ubiquitin-conjugating UBE2N/UBC13 and ubiquitinates non-histone substrates such as PCNA. Substrates that are polyubiquitinated at 'Lys-63' are usually not targeted for degradation. Also catalyzes the formation of 'Lys-48'-linked polyubiquitin chains via interaction with the ubiquitin-conjugating UBE2L6/UBCH8, leading to degradation of substrate proteins such as CHEK2, JMJD2A/KDM4A and KU80/XRCC5: it is still unclear how the preference toward 'Lys-48'- versus 'Lys-63'-linked ubiquitination is regulated but it could be due to RNF8 ability to interact with specific E2 specific ligases. For instance, interaction with phosphorylated HERC2 promotes the association between RNF8 and UBE2N/UBC13 and favors the specific formation of 'Lys-63'-linked ubiquitin chains. Promotes non-homologous end joining (NHEJ) by promoting the 'Lys-48'-linked ubiquitination and degradation the of KU80/XRCC5. Following DNA damage, mediates the ubiquitination and degradation of JMJD2A/KDM4A in collaboration with RNF168, leading to unmask H4K20me2 mark and promote the recruitment of TP53BP1 at DNA damage sites. Following DNA damage, mediates the ubiquitination and degradation of POLD4/p12, a subunit of DNA polymerase delta. In the absence of POLD4, DNA polymerase delta complex exhibits higher proofreading activity. In addition to its function in damage signaling, also plays a role in higher-order chromatin structure by mediating extensive chromatin decondensation. Involved in the activation of ATM by promoting histone H2B ubiquitination, which indirectly triggers histone H4 'Lys-16' acetylation (H4K16ac), establishing a chromatin environment that promotes efficient activation of ATM kinase. Required in the testis, where it plays a role in the replacement of histones during spermatogenesis. At uncapped telomeres, promotes the joining of deprotected chromosome ends by inducing H2A ubiquitination and TP53BP1 recruitment, suggesting that it may enhance cancer development by aggravating telomere-induced genome instability in case of telomeric crisis. Promotes the assembly of RAD51 at DNA DSBs in the absence of BRCA1 and TP53BP1 Also involved in class switch recombination in immune system, via its role in regulation of DSBs repair. May be required for proper exit from mitosis after spindle checkpoint activation and may regulate cytokinesis. May play a role in the regulation of RXRA-mediated transcriptional activity. Not involved in RXRA ubiquitination by UBE2E2. The sequence is that of E3 ubiquitin-protein ligase RNF8 from Pongo abelii (Sumatran orangutan).